The following is a 241-amino-acid chain: Probable transcriptional regulatory protein AZOSEA20720 (241 aa).

Residues 1 to 21 (MAGHSKWANIQHRKGRQDAKR) form a disordered region.

It belongs to the TACO1 family.

The protein localises to the cytoplasm. This Aromatoleum aromaticum (strain DSM 19018 / LMG 30748 / EbN1) (Azoarcus sp. (strain EbN1)) protein is Probable transcriptional regulatory protein AZOSEA20720.